We begin with the raw amino-acid sequence, 125 residues long: Small ribosomal subunit protein uS13 (125 aa).

The segment at 95 to 125 (GLPLRGQRTKTNARTRKGKRKTVANKKIASK) is disordered.

This sequence belongs to the universal ribosomal protein uS13 family. Part of the 30S ribosomal subunit. Forms a loose heterodimer with protein S19. Forms two bridges to the 50S subunit in the 70S ribosome.

In terms of biological role, located at the top of the head of the 30S subunit, it contacts several helices of the 16S rRNA. In the 70S ribosome it contacts the 23S rRNA (bridge B1a) and protein L5 of the 50S subunit (bridge B1b), connecting the 2 subunits; these bridges are implicated in subunit movement. Contacts the tRNAs in the A and P-sites. In Borrelia garinii subsp. bavariensis (strain ATCC BAA-2496 / DSM 23469 / PBi) (Borreliella bavariensis), this protein is Small ribosomal subunit protein uS13.